Consider the following 1307-residue polypeptide: tRNA(adenine(34)) deaminase, chloroplastic (1307 aa).

The transit peptide at 1–55 (MFNTYTNSLQWPIRSRNQQDYCSLLPERSESYKLSKAYTSSRCYCVSSRSSCCCC) directs the protein to the chloroplast. 7 disordered regions span residues 245-377 (EYIG…ESTG), 439-458 (SSED…SSQE), 544-563 (HNPL…SHTS), 576-618 (EKRL…GQTT), 753-807 (GVIN…ATEG), 837-957 (SRAG…EEGG), and 975-1073 (LPSR…SVSA). Residues 267–278 (SSCSSYYSLASS) are compositionally biased toward low complexity. Residues 280–309 (EFESDTEDQEEDVEIYRENVRSSEKKVVDQ) adopt a coiled-coil conformation. Acidic residues predominate over residues 281–292 (FESDTEDQEEDV). Over residues 293–321 (EIYRENVRSSEKKVVDQSAKRLKSRKEAS) the composition is skewed to basic and acidic residues. Residues 367 to 377 (QTENRVSESTG) are compositionally biased toward polar residues. A compositionally biased stretch (basic and acidic residues) spans 439–448 (SSEDRVSEMR). Composition is skewed to polar residues over residues 546-563 (PLQT…SHTS) and 582-591 (QGSTTAVQSD). Composition is skewed to basic and acidic residues over residues 592-615 (SKVE…KKDG) and 760-771 (EEQRAESNQLKR). The segment covering 852-863 (SSPNESVSSATW) has biased composition (polar residues). Residues 866–883 (GREHDGSSDDNTKGDKVL) are compositionally biased toward basic and acidic residues. Composition is skewed to polar residues over residues 895 to 907 (VGQT…SEYP), 924 to 947 (SSPS…SGNQ), and 1045 to 1073 (SGSS…SVSA). Residues 1108–1230 (TVDEIFMREA…RLFPGGEGNG (123 aa)) enclose the CMP/dCMP-type deaminase domain. His1159 is a binding site for Zn(2+). Glu1161 (proton donor) is an active-site residue. Zn(2+) is bound by residues Cys1189 and Cys1192. Residues 1268 to 1293 (QLRRKKKDKNSDPPTPTDHHHHHLPK) are disordered.

The protein belongs to the cytidine and deoxycytidylate deaminase family. Homodimer. The cofactor is Zn(2+).

The protein localises to the plastid. The protein resides in the chloroplast. It catalyses the reaction adenosine(34) in tRNA + H2O + H(+) = inosine(34) in tRNA + NH4(+). Its function is as follows. Deaminates adenosines to inosines in tRNA-Arg(ACG). Exclusively involved in A-to-I editing of the prokaryote-type chloroplast-tRNA and not involved in C-to-U editing. This is tRNA(adenine(34)) deaminase, chloroplastic (TADA) from Arabidopsis thaliana (Mouse-ear cress).